The primary structure comprises 249 residues: MASRQMTNDHLRLSWHDTQMMATLSPQTVMDYFCRKSNPFYDHMCNNETVRMQRLGPEHLHNMIGLEYILLHVAEPILYVIRKQHRHNPSEATPIADYYIIGGTVYKAPDLANVINSRILNTVVNLQSAFEEASSYARYHPNKGYTWDFSSNKVFSDRSKSDKKDANSAKDENSGTLFQKQRVDMLLAELLRKFPPPIPPMLQNLQQPPPAGDDLNTARNASEMNNATGPLDIKTEGVDMKPPPEKKSK.

Over residues 156-173 (SDRSKSDKKDANSAKDEN) the composition is skewed to basic and acidic residues. Disordered regions lie at residues 156 to 177 (SDRSKSDKKDANSAKDENSGTL) and 198 to 249 (IPPM…KKSK). The span at 217 to 228 (TARNASEMNNAT) shows a compositional bias: polar residues. The segment covering 233 to 249 (IKTEGVDMKPPPEKKSK) has biased composition (basic and acidic residues).

This sequence belongs to the Mediator complex subunit 6 family. As to quaternary structure, component of the Mediator complex, which includes at least MED4, MED6, MED14, MED17, MED18, MED20, MED21, MED23, MED24, MED27, MED30 and MED31.

The protein resides in the nucleus. Functionally, component of the Mediator complex, a coactivator involved in the regulated transcription of nearly all RNA polymerase II-dependent genes. Mediator functions as a bridge to convey information from gene-specific regulatory proteins to the basal RNA polymerase II transcription machinery. Mediator is recruited to promoters by direct interactions with regulatory proteins and serves as a scaffold for the assembly of a functional preinitiation complex with RNA polymerase II and the general transcription factors. Required for activated transcription of the MtnA, MtnB and MtnD genes. In Drosophila melanogaster (Fruit fly), this protein is Mediator of RNA polymerase II transcription subunit 6 (MED6).